We begin with the raw amino-acid sequence, 349 residues long: DNA replication and repair protein RecF (349 aa).

Residue 30–37 (GKNGSGKT) participates in ATP binding.

This sequence belongs to the RecF family.

It is found in the cytoplasm. In terms of biological role, the RecF protein is involved in DNA metabolism; it is required for DNA replication and normal SOS inducibility. RecF binds preferentially to single-stranded, linear DNA. It also seems to bind ATP. The polypeptide is DNA replication and repair protein RecF (Francisella tularensis subsp. novicida (strain U112)).